The chain runs to 273 residues: Putative pyruvate, phosphate dikinase regulatory protein (273 aa).

ADP is bound at residue 153 to 160 (GVSRTSKT).

The protein belongs to the pyruvate, phosphate/water dikinase regulatory protein family. PDRP subfamily.

It carries out the reaction N(tele)-phospho-L-histidyl/L-threonyl-[pyruvate, phosphate dikinase] + ADP = N(tele)-phospho-L-histidyl/O-phospho-L-threonyl-[pyruvate, phosphate dikinase] + AMP + H(+). The enzyme catalyses N(tele)-phospho-L-histidyl/O-phospho-L-threonyl-[pyruvate, phosphate dikinase] + phosphate + H(+) = N(tele)-phospho-L-histidyl/L-threonyl-[pyruvate, phosphate dikinase] + diphosphate. Bifunctional serine/threonine kinase and phosphorylase involved in the regulation of the pyruvate, phosphate dikinase (PPDK) by catalyzing its phosphorylation/dephosphorylation. This chain is Putative pyruvate, phosphate dikinase regulatory protein, found in Rhizobium meliloti (strain 1021) (Ensifer meliloti).